Reading from the N-terminus, the 237-residue chain is Purine nucleoside phosphorylase DeoD-type (237 aa).

Residue histidine 4 participates in a purine D-ribonucleoside binding. Phosphate is bound by residues glycine 20, arginine 24, arginine 43, and 87-90; that span reads RVGS. Residues 179–181 and 203–204 each bind a purine D-ribonucleoside; these read EME and SD. The Proton donor role is filled by aspartate 204.

It belongs to the PNP/UDP phosphorylase family. Homohexamer; trimer of homodimers.

The catalysed reaction is a purine D-ribonucleoside + phosphate = a purine nucleobase + alpha-D-ribose 1-phosphate. It catalyses the reaction a purine 2'-deoxy-D-ribonucleoside + phosphate = a purine nucleobase + 2-deoxy-alpha-D-ribose 1-phosphate. In terms of biological role, catalyzes the reversible phosphorolytic breakdown of the N-glycosidic bond in the beta-(deoxy)ribonucleoside molecules, with the formation of the corresponding free purine bases and pentose-1-phosphate. The sequence is that of Purine nucleoside phosphorylase DeoD-type from Dichelobacter nodosus (strain VCS1703A).